A 247-amino-acid polypeptide reads, in one-letter code: 2,3-bisphosphoglycerate-dependent phosphoglycerate mutase (247 aa).

Residues Arg8–Asn15, Thr21–Gly22, Arg60, Glu87–Tyr90, Lys98, Arg114–Arg115, and Gly183–Asn184 each bind substrate. The active-site Tele-phosphohistidine intermediate is His9. The active-site Proton donor/acceptor is the Glu87.

It belongs to the phosphoglycerate mutase family. BPG-dependent PGAM subfamily. Homodimer.

The catalysed reaction is (2R)-2-phosphoglycerate = (2R)-3-phosphoglycerate. Its pathway is carbohydrate degradation; glycolysis; pyruvate from D-glyceraldehyde 3-phosphate: step 3/5. Catalyzes the interconversion of 2-phosphoglycerate and 3-phosphoglycerate. This chain is 2,3-bisphosphoglycerate-dependent phosphoglycerate mutase, found in Leptothrix cholodnii (strain ATCC 51168 / LMG 8142 / SP-6) (Leptothrix discophora (strain SP-6)).